The primary structure comprises 332 residues: Glycerol-3-phosphate dehydrogenase [NAD(P)+] (332 aa).

3 residues coordinate NADPH: Trp11, Arg30, and Lys108. Lys108, Gly137, and Ser139 together coordinate sn-glycerol 3-phosphate. NADPH is bound at residue Ala141. The sn-glycerol 3-phosphate site is built by Lys192, Asp245, Ser255, Arg256, and Asn257. The Proton acceptor role is filled by Lys192. An NADPH-binding site is contributed by Arg256. The NADPH site is built by Val280 and Glu282.

Belongs to the NAD-dependent glycerol-3-phosphate dehydrogenase family.

The protein localises to the cytoplasm. The enzyme catalyses sn-glycerol 3-phosphate + NAD(+) = dihydroxyacetone phosphate + NADH + H(+). The catalysed reaction is sn-glycerol 3-phosphate + NADP(+) = dihydroxyacetone phosphate + NADPH + H(+). Its pathway is membrane lipid metabolism; glycerophospholipid metabolism. Catalyzes the reduction of the glycolytic intermediate dihydroxyacetone phosphate (DHAP) to sn-glycerol 3-phosphate (G3P), the key precursor for phospholipid synthesis. The polypeptide is Glycerol-3-phosphate dehydrogenase [NAD(P)+] (Burkholderia thailandensis (strain ATCC 700388 / DSM 13276 / CCUG 48851 / CIP 106301 / E264)).